The sequence spans 534 residues: MAQQGKILKEQKYDRQLRLWGDHGQEALESAHVCLINATATGTEILKNLVLPGIGSFTIIDGNQVSGEDVGNNFFLQKCSIGKNRAQAAMEFLQELNSDVSGSFVEESPENLLDNDPSFFCRFTIVVATQLLESTLLRLADVLWNSQIPLLICRTYGLVGYMRIIIKEHPVIESHPDNALEDLRLDKPFPELREHFQSYDLDHMEKKDHSHTPWIVIIAKYLAQWYSETNGRIPKSYKEKEDFRELIRQGILKNENGAPEDEENFEEAIKNVNTALNTTQIPSSIEDIFNDDRCINITKQTPSFWILARALKEFVAKEGQGNLPVRGTIPDMIADSNKYIKLQNVYREKAKKDAAAVGNHVAKLLQSCGQAPESISEKELKLLCSNSAFLRVVRCRSLAEEYGLHTVNKDEIISSMDNPDNEIVLYLMLRAVDRFHKQHGRYPGVSNYQVEEDIGKLKSCLTGFLQEYGLSVMVKDDYVHEFCRYGAAEPHTVAAFLGGAAAQEVIKIITKQFVIFNNTYIYSGMSQTSATFQL.

Alanine 2 is subject to N-acetylalanine. Residues lysine 6 and lysine 341 each carry the N6-acetyllysine modification. The interval 331–344 (DMIADSNKYIKLQN) is interaction with UBA3.

It belongs to the ubiquitin-activating E1 family. ULA1 subfamily. Heterodimer of UBA3 and NAE1. The complex binds NEDD8 and UBE2M. Binds APP and TP53BP2. Ubiquitinated by TRIP12, leading to its degradation by the proteasome. Expressed throughout the brain. In hippocampus, strongly expressed in granule cells and in the pyramidal cell layer. Strongly expressed in the piriform cortex. In the cerebellum, expressed only in Purkinje cells.

Its subcellular location is the cell membrane. The protein operates within protein modification; protein neddylation. Binding of TP53BP2 to the regulatory subunit NAE1 decreases neddylation activity. Its function is as follows. Regulatory subunit of the dimeric UBA3-NAE1 E1 enzyme. E1 activates NEDD8 by first adenylating its C-terminal glycine residue with ATP, thereafter linking this residue to the side chain of the catalytic cysteine, yielding a NEDD8-UBA3 thioester and free AMP. E1 finally transfers NEDD8 to the catalytic cysteine of UBE2M. Necessary for cell cycle progression through the S-M checkpoint. Overexpression of NAE1 causes apoptosis through deregulation of NEDD8 conjugation. The covalent attachment of NEDD8 to target proteins is known as 'neddylation' and the process is involved in the regulation of cell growth, viability and development. The sequence is that of NEDD8-activating enzyme E1 regulatory subunit (Nae1) from Rattus norvegicus (Rat).